We begin with the raw amino-acid sequence, 513 residues long: GMP synthase [glutamine-hydrolyzing] (513 aa).

The 191-residue stretch at 8-198 folds into the Glutamine amidotransferase type-1 domain; it reads KIIVLDYGSQ…ALNTCGAKGN (191 aa). Catalysis depends on Cys85, which acts as the Nucleophile. Residues His172 and Glu174 contribute to the active site. A GMPS ATP-PPase domain is found at 199-388; the sequence is WSMENFIDMQ…LGMPDEIVWR (190 aa). 226-232 lines the ATP pocket; it reads SGGVDSS.

As to quaternary structure, homodimer.

The enzyme catalyses XMP + L-glutamine + ATP + H2O = GMP + L-glutamate + AMP + diphosphate + 2 H(+). Its pathway is purine metabolism; GMP biosynthesis; GMP from XMP (L-Gln route): step 1/1. In terms of biological role, catalyzes the synthesis of GMP from XMP. The sequence is that of GMP synthase [glutamine-hydrolyzing] from Lactococcus lactis subsp. cremoris (strain SK11).